The chain runs to 336 residues: Ribosomal RNA large subunit methyltransferase F (336 aa).

This sequence belongs to the methyltransferase superfamily. METTL16/RlmF family.

It localises to the cytoplasm. It carries out the reaction adenosine(1618) in 23S rRNA + S-adenosyl-L-methionine = N(6)-methyladenosine(1618) in 23S rRNA + S-adenosyl-L-homocysteine + H(+). Its function is as follows. Specifically methylates the adenine in position 1618 of 23S rRNA. The chain is Ribosomal RNA large subunit methyltransferase F from Yersinia pestis bv. Antiqua (strain Angola).